A 174-amino-acid polypeptide reads, in one-letter code: uncharacterized protein (174 aa).

This is an uncharacterized protein from Homo sapiens (Human).